A 652-amino-acid polypeptide reads, in one-letter code: tRNA-guanine(15) transglycosylase (652 aa).

Catalysis depends on Asp88, which acts as the Nucleophile. Residues Asp123 and Ala194 each coordinate substrate. Zn(2+) contacts are provided by Cys280, Cys282, and Cys285. The 76-residue stretch at 577 to 652 (KYRVVIDSEV…AAVSVRSGFK (76 aa)) folds into the PUA domain.

Belongs to the archaeosine tRNA-ribosyltransferase family. Zn(2+) serves as cofactor.

The enzyme catalyses guanosine(15) in tRNA + 7-cyano-7-deazaguanine = 7-cyano-7-carbaguanosine(15) in tRNA + guanine. It functions in the pathway tRNA modification; archaeosine-tRNA biosynthesis. Functionally, exchanges the guanine residue with 7-cyano-7-deazaguanine (preQ0) at position 15 in the dihydrouridine loop (D-loop) of archaeal tRNAs. This is tRNA-guanine(15) transglycosylase from Methanococcus aeolicus (strain ATCC BAA-1280 / DSM 17508 / OCM 812 / Nankai-3).